A 109-amino-acid polypeptide reads, in one-letter code: Anther-specific protein MZm3-3 (109 aa).

Positions 1-41 (MTATTTTAAGGGKVQPRGLPVALSLLLLLVLAAGLGGGAEA) are cleaved as a signal peptide. 4 cysteine pairs are disulfide-bonded: Cys45-Cys86, Cys55-Cys75, Cys76-Cys101, and Cys88-Cys108.

This sequence belongs to the A9/FIL1 family. Tapetum of anthers.

The protein localises to the secreted. This chain is Anther-specific protein MZm3-3, found in Zea mays (Maize).